Reading from the N-terminus, the 206-residue chain is Ribonuclease HII (206 aa).

Residues Glu-14–Val-206 enclose the RNase H type-2 domain. A divalent metal cation contacts are provided by Asp-20, Glu-21, and Asp-117.

Belongs to the RNase HII family. The cofactor is Mn(2+). Mg(2+) is required as a cofactor.

The protein localises to the cytoplasm. It carries out the reaction Endonucleolytic cleavage to 5'-phosphomonoester.. In terms of biological role, endonuclease that specifically degrades the RNA of RNA-DNA hybrids. The polypeptide is Ribonuclease HII (Chlorobium chlorochromatii (strain CaD3)).